The sequence spans 843 residues: Protein translocase subunit SecA (843 aa).

ATP is bound by residues Gln91, 109 to 113 (GEGKT), and Asp498. Basic and acidic residues predominate over residues 796–825 (DFGKAEHVSAEDGKEKAKAEPYVKDEHIGR). Residues 796–833 (DFGKAEHVSAEDGKEKAKAEPYVKDEHIGRNDPCPCGS) form a disordered region. Positions 829, 831, 840, and 841 each coordinate Zn(2+).

Belongs to the SecA family. Monomer and homodimer. Part of the essential Sec protein translocation apparatus which comprises SecA, SecYEG and auxiliary proteins SecDF. Other proteins may also be involved. Zn(2+) serves as cofactor.

Its subcellular location is the cell membrane. The protein resides in the cytoplasm. The catalysed reaction is ATP + H2O + cellular proteinSide 1 = ADP + phosphate + cellular proteinSide 2.. Functionally, part of the Sec protein translocase complex. Interacts with the SecYEG preprotein conducting channel. Has a central role in coupling the hydrolysis of ATP to the transfer of proteins into and across the cell membrane, serving as an ATP-driven molecular motor driving the stepwise translocation of polypeptide chains across the membrane. In Staphylococcus saprophyticus subsp. saprophyticus (strain ATCC 15305 / DSM 20229 / NCIMB 8711 / NCTC 7292 / S-41), this protein is Protein translocase subunit SecA.